Consider the following 427-residue polypeptide: Tegument protein VP16 homolog (427 aa).

Belongs to the herpesviridae tegument protein VP16 protein family.

The protein localises to the virion tegument. The protein resides in the host nucleus. In terms of biological role, transcriptional activator of immediate-early (IE) gene products (alpha genes). Acts as a key activator of lytic infection by initiating the lytic program through the assembly of the transcriptional regulatory VP16-induced complex composed of VP16 and two cellular factors, HCFC1 and POU2F1. VP16-induced complex represents a regulatory switch: when it is on, it promotes IE-gene expression and thus lytic infection, and when it is off, it limits IE-gene transcription favoring latent infection. Functionally, may play a role in the aggregation of tegument proteins around nucleocapsids during virus morphogenesis. In Gallus gallus (Chicken), this protein is Tegument protein VP16 homolog (MDV061).